Consider the following 362-residue polypeptide: Putative HLA class I histocompatibility antigen, alpha chain H (362 aa).

Positions M1–A24 are cleaved as a signal peptide. The alpha-1 stretch occupies residues R25–G114. Over R25–I308 the chain is Extracellular. A glycan (N-linked (GlcNAc...) asparagine) is linked at N110. The alpha-2 stretch occupies residues G115–A206. Residues D207 to W298 are alpha-3. Positions P209–R297 constitute an Ig-like C1-type domain. A disulfide bond links C227 and C283. A connecting peptide region spans residues E299 to I308. A helical membrane pass occupies residues V309 to W332. Residues R333 to A362 are Cytoplasmic-facing. Residues S337 to A362 are disordered. A compositionally biased stretch (low complexity) spans G342–S356.

It belongs to the MHC class I family. Heterodimer of an alpha chain and a beta chain (beta-2-microglobulin).

The protein resides in the cell membrane. In terms of biological role, involved in the presentation of foreign antigens to the immune system. This is Putative HLA class I histocompatibility antigen, alpha chain H (HLA-H) from Homo sapiens (Human).